The following is a 380-amino-acid chain: Cytochrome b (380 aa).

The next 4 membrane-spanning stretches (helical) occupy residues 34 to 54 (FGSL…LLAM), 78 to 99 (WLIR…YLHI), 114 to 134 (WNTG…GYVL), and 179 to 199 (FFAL…IHLT). Residues His-84 and His-98 each contribute to the heme b site. Heme b is bound by residues His-183 and His-197. Position 202 (His-202) interacts with a ubiquinone. Helical transmembrane passes span 227–247 (LKDI…ALFS), 289–309 (LGGV…PFLH), 321–341 (LSQL…WVGS), and 348–368 (FIII…ILFP).

This sequence belongs to the cytochrome b family. As to quaternary structure, the cytochrome bc1 complex contains 11 subunits: 3 respiratory subunits (MT-CYB, CYC1 and UQCRFS1), 2 core proteins (UQCRC1 and UQCRC2) and 6 low-molecular weight proteins (UQCRH/QCR6, UQCRB/QCR7, UQCRQ/QCR8, UQCR10/QCR9, UQCR11/QCR10 and a cleavage product of UQCRFS1). This cytochrome bc1 complex then forms a dimer. The cofactor is heme b.

Its subcellular location is the mitochondrion inner membrane. In terms of biological role, component of the ubiquinol-cytochrome c reductase complex (complex III or cytochrome b-c1 complex) that is part of the mitochondrial respiratory chain. The b-c1 complex mediates electron transfer from ubiquinol to cytochrome c. Contributes to the generation of a proton gradient across the mitochondrial membrane that is then used for ATP synthesis. In Thalassoica antarctica (Antarctic petrel), this protein is Cytochrome b (MT-CYB).